Consider the following 164-residue polypeptide: Phosphopantetheine adenylyltransferase (164 aa).

Ser10 lines the substrate pocket. ATP is bound by residues 10-11 and His18; that span reads SF. Substrate-binding residues include Lys42, Leu74, and Arg88. ATP is bound by residues 89-91, Glu99, and 124-130; these read GLR and YSFLSSS.

This sequence belongs to the bacterial CoaD family. Homohexamer. Requires Mg(2+) as cofactor.

The protein localises to the cytoplasm. It catalyses the reaction (R)-4'-phosphopantetheine + ATP + H(+) = 3'-dephospho-CoA + diphosphate. It participates in cofactor biosynthesis; coenzyme A biosynthesis; CoA from (R)-pantothenate: step 4/5. Functionally, reversibly transfers an adenylyl group from ATP to 4'-phosphopantetheine, yielding dephospho-CoA (dPCoA) and pyrophosphate. In Bacillus licheniformis (strain ATCC 14580 / DSM 13 / JCM 2505 / CCUG 7422 / NBRC 12200 / NCIMB 9375 / NCTC 10341 / NRRL NRS-1264 / Gibson 46), this protein is Phosphopantetheine adenylyltransferase.